The chain runs to 340 residues: tRNA N6-adenosine threonylcarbamoyltransferase (340 aa).

The Fe cation site is built by His113 and His117. Substrate is bound by residues 135-139 (LVSGG), Asp169, Gly182, Asp186, and Asn274. Asp302 serves as a coordination point for Fe cation.

Belongs to the KAE1 / TsaD family. The cofactor is Fe(2+).

It is found in the cytoplasm. It catalyses the reaction L-threonylcarbamoyladenylate + adenosine(37) in tRNA = N(6)-L-threonylcarbamoyladenosine(37) in tRNA + AMP + H(+). In terms of biological role, required for the formation of a threonylcarbamoyl group on adenosine at position 37 (t(6)A37) in tRNAs that read codons beginning with adenine. Is involved in the transfer of the threonylcarbamoyl moiety of threonylcarbamoyl-AMP (TC-AMP) to the N6 group of A37, together with TsaE and TsaB. TsaD likely plays a direct catalytic role in this reaction. This is tRNA N6-adenosine threonylcarbamoyltransferase from Mycolicibacterium vanbaalenii (strain DSM 7251 / JCM 13017 / BCRC 16820 / KCTC 9966 / NRRL B-24157 / PYR-1) (Mycobacterium vanbaalenii).